The following is a 221-amino-acid chain: MRLILLGAPGAGKGTQANFIKEKFGIPQISTGDMLRAAVKAGTPLGLEAKRFMDAGELVTDELIINLVKERLQQPDCANGYLFDGFPRTIPQAEAMKQAGVPIDYVLEIDVPFDEIILRMSGRRSHAASGRTYHVKFNPPKVEGVDDMTGEPLIQRDDDKEETVKKRLEVYEAQTKPLIEYYNTWAKNGDSSTPLTAPQYRRISGLGSVDEIRDRAFEALK.

Residue 10 to 15 (GAGKGT) participates in ATP binding. The tract at residues 30–59 (STGDMLRAAVKAGTPLGLEAKRFMDAGELV) is NMP. AMP contacts are provided by residues T31, R36, 57 to 59 (ELV), 85 to 88 (GFPR), and Q92. The interval 122 to 159 (GRRSHAASGRTYHVKFNPPKVEGVDDMTGEPLIQRDDD) is LID. ATP is bound by residues R123 and 132–133 (TY). AMP contacts are provided by R156 and R167. G207 lines the ATP pocket.

The protein belongs to the adenylate kinase family. As to quaternary structure, monomer.

The protein resides in the cytoplasm. The catalysed reaction is AMP + ATP = 2 ADP. It functions in the pathway purine metabolism; AMP biosynthesis via salvage pathway; AMP from ADP: step 1/1. Its function is as follows. Catalyzes the reversible transfer of the terminal phosphate group between ATP and AMP. Plays an important role in cellular energy homeostasis and in adenine nucleotide metabolism. The protein is Adenylate kinase of Paraburkholderia phytofirmans (strain DSM 17436 / LMG 22146 / PsJN) (Burkholderia phytofirmans).